A 344-amino-acid chain; its full sequence is Thioredoxin domain-containing protein 15 (344 aa).

A signal peptide spans 1–20; it reads MQLLCWWQVLLWVLGLPAHG. Over 21–305 the chain is Extracellular; the sequence is LEVAEDSGHP…GPLPSTLIKT (285 aa). Disordered stretches follow at residues 55 to 119 and 136 to 156; these read DHRD…FGLQ and GVTE…SLKS. Residues 88-97 show a composition bias toward basic and acidic residues; the sequence is EDQRSPEAHD. The Thioredoxin domain maps to 163-280; sequence ERNVTGLENF…LKIFIFNQTG (118 aa). 4 N-linked (GlcNAc...) asparagine glycosylation sites follow: N171, N178, N190, and N277. The chain crosses the membrane as a helical span at residues 306 to 326; the sequence is VDWLLVFSLFFLISFIMYATI. Over 327 to 344 the chain is Cytoplasmic; the sequence is RTESIRWLIPGQEQEHAE.

Its subcellular location is the cell projection. It is found in the cilium membrane. Functionally, acts as a positive regulator of ciliary hedgehog signaling. Required for cilia biogenesis. This Mus musculus (Mouse) protein is Thioredoxin domain-containing protein 15 (Txndc15).